The sequence spans 452 residues: tRNA modification GTPase MnmE (452 aa).

Arginine 22, glutamate 79, and lysine 119 together coordinate (6S)-5-formyl-5,6,7,8-tetrahydrofolate. Positions 215 to 375 (GMKVVIAGRP…LRQHLKQSMG (161 aa)) constitute a TrmE-type G domain. Residue asparagine 225 participates in K(+) binding. GTP is bound by residues 225-230 (NAGKSS), 244-250 (TDIAGTT), 269-272 (DTAG), and 333-336 (NKAD). Serine 229 is a binding site for Mg(2+). Residues threonine 244, isoleucine 246, and threonine 249 each contribute to the K(+) site. A Mg(2+)-binding site is contributed by threonine 250. Position 452 (lysine 452) interacts with (6S)-5-formyl-5,6,7,8-tetrahydrofolate.

It belongs to the TRAFAC class TrmE-Era-EngA-EngB-Septin-like GTPase superfamily. TrmE GTPase family. As to quaternary structure, homodimer. Heterotetramer of two MnmE and two MnmG subunits. It depends on K(+) as a cofactor.

It is found in the cytoplasm. In terms of biological role, exhibits a very high intrinsic GTPase hydrolysis rate. Involved in the addition of a carboxymethylaminomethyl (cmnm) group at the wobble position (U34) of certain tRNAs, forming tRNA-cmnm(5)s(2)U34. This chain is tRNA modification GTPase MnmE, found in Histophilus somni (strain 129Pt) (Haemophilus somnus).